The chain runs to 433 residues: Glutamate-1-semialdehyde 2,1-aminomutase (433 aa).

The residue at position 273 (Lys273) is an N6-(pyridoxal phosphate)lysine.

The protein belongs to the class-III pyridoxal-phosphate-dependent aminotransferase family. HemL subfamily. Homodimer. Requires pyridoxal 5'-phosphate as cofactor.

The protein resides in the cytoplasm. It carries out the reaction (S)-4-amino-5-oxopentanoate = 5-aminolevulinate. It functions in the pathway porphyrin-containing compound metabolism; protoporphyrin-IX biosynthesis; 5-aminolevulinate from L-glutamyl-tRNA(Glu): step 2/2. The polypeptide is Glutamate-1-semialdehyde 2,1-aminomutase (Ralstonia pickettii (strain 12J)).